The chain runs to 526 residues: Glucose-6-phosphate isomerase (526 aa).

The active-site Proton donor is the Glu347. Catalysis depends on residues His378 and Lys493.

This sequence belongs to the GPI family.

The protein localises to the cytoplasm. It catalyses the reaction alpha-D-glucose 6-phosphate = beta-D-fructose 6-phosphate. The protein operates within carbohydrate biosynthesis; gluconeogenesis. It participates in carbohydrate degradation; glycolysis; D-glyceraldehyde 3-phosphate and glycerone phosphate from D-glucose: step 2/4. In terms of biological role, catalyzes the reversible isomerization of glucose-6-phosphate to fructose-6-phosphate. In Chlamydia pneumoniae (Chlamydophila pneumoniae), this protein is Glucose-6-phosphate isomerase.